The chain runs to 29 residues: GKPICGETCFKGKCYTPGCTCSYPICKKN.

The segment at residues 1–29 (GKPICGETCFKGKCYTPGCTCSYPICKKN) is a cross-link (cyclopeptide (Gly-Asn)). 3 disulfides stabilise this stretch: C5–C19, C9–C21, and C14–C26.

Post-translationally, this is a cyclic peptide. In terms of processing, contains 3 disulfide bonds.

Functionally, probably participates in a plant defense mechanism (Potential). Binds to and induces leakage in phospholipd membranes, particularly ones containing 1-palmitoyl-2-oleophosphatidylethanolamine (POPE). In vitro, displays cytotoxicity against cultured cells. Not active against Gram-negative bacterium E.coli ATCC 25922 or Gram-positive bacterium S.aureus ATCC 25923 up to a concentration of 64 uM. In Melicytus latifolius (Norfolk Island mahoe), this protein is Cyclotide mela-4.